A 193-amino-acid chain; its full sequence is MNTLIDNPKAMASGYLAMAQMFSYPDADAWRRLTENGLVDPALGRETLEAEYLGLFEMGGGTSTMSLYEGQNRPERGRDGILQELLRFYEFFDVHLNQDEREYPDHLVTELEFLAWLCLQEHAALRDGRDAEPFQNAARDFLVRHLAAWLPDFRQRLEATETTYAQYGPTLGELVETHRSRLGDQPQKSREMQ.

This sequence belongs to the type II DMSO reductase enzyme chaperone family.

It localises to the cytoplasm. May function as a system-specific chaperone protein essential for the assembly of an active chlorate reductase ClrABC. The chain is Chlorate reductase assembly chaperone protein (clrD) from Ideonella dechloratans.